Reading from the N-terminus, the 905-residue chain is DNA-directed RNA polymerase subunit Rpo1N (905 aa).

Zn(2+) contacts are provided by Cys60, Cys63, Cys70, His73, Cys100, Cys103, Cys147, and Cys150. 3 residues coordinate Mg(2+): Asp461, Asp463, and Asp465.

The protein belongs to the RNA polymerase beta' chain family. As to quaternary structure, part of the RNA polymerase complex. Mg(2+) is required as a cofactor. Requires Zn(2+) as cofactor.

The protein resides in the cytoplasm. It carries out the reaction RNA(n) + a ribonucleoside 5'-triphosphate = RNA(n+1) + diphosphate. In terms of biological role, DNA-dependent RNA polymerase (RNAP) catalyzes the transcription of DNA into RNA using the four ribonucleoside triphosphates as substrates. Forms the clamp head domain. The polypeptide is DNA-directed RNA polymerase subunit Rpo1N (Thermococcus celer).